The sequence spans 342 residues: Heat-inducible transcription repressor HrcA (342 aa).

The protein belongs to the HrcA family.

Functionally, negative regulator of class I heat shock genes (grpE-dnaK-dnaJ and groELS operons). Prevents heat-shock induction of these operons. This Dechloromonas aromatica (strain RCB) protein is Heat-inducible transcription repressor HrcA.